We begin with the raw amino-acid sequence, 347 residues long: Doublecortin domain-containing protein 2C (347 aa).

Doublecortin domains are found at residues K16–I98 and R136–W217. The segment at K235 to S260 is disordered. Over residues K241–L251 the composition is skewed to basic and acidic residues.

The protein resides in the cell projection. It localises to the cilium. It is found in the flagellum. The protein localises to the cytoplasm. This chain is Doublecortin domain-containing protein 2C, found in Mus musculus (Mouse).